A 204-amino-acid chain; its full sequence is Protein Mis18-alpha (204 aa).

Residues Ser-13, Ser-16, and Ser-17 each carry the phosphoserine modification. Residues 51–149 (PLVFLCARCR…SVEAVESYTL (99 aa)) form the Mis18 domain. 4 residues coordinate Zn(2+): Cys-56, Cys-59, Cys-112, and Cys-115. Lys-133 participates in a covalent cross-link: Glycyl lysine isopeptide (Lys-Gly) (interchain with G-Cter in SUMO2). At Ser-204 the chain carries Phosphoserine.

Belongs to the mis18 family. Homodimer, and heterodimer with OIP5/MIS18B. Identified in a complex containing MIS18A, OIP5/MIS18B, MIS18BP1, RBBP7 and RBBP4.

The protein resides in the nucleus. Its subcellular location is the chromosome. The protein localises to the centromere. Required for recruitment of CENPA to centromeres and normal chromosome segregation during mitosis. This is Protein Mis18-alpha (Mis18a) from Mus musculus (Mouse).